The chain runs to 421 residues: Heterogeneous nuclear ribonucleoprotein 27C (421 aa).

RRM domains are found at residues 7–88 (GKLF…RTLQ) and 96–173 (YKVF…KAEP). Disordered regions lie at residues 171 to 191 (AEPR…GGAY) and 240 to 373 (GTSP…SEYD). The residue at position 177 (serine 177) is a Phosphoserine. The segment covering 240–250 (GTSPQQQQYGY) has biased composition (polar residues). A compositionally biased stretch (pro residues) spans 264 to 273 (PPGPQGPPPQ). The segment covering 275-284 (SNYAGPQQTQ) has biased composition (polar residues). A compositionally biased stretch (low complexity) spans 293-302 (NSTSTGAPSG). A phosphoserine mark is found at serine 366, serine 368, and serine 370. Tyrosine 372 is subject to Phosphotyrosine. Serine 379 bears the Phosphoserine mark. The segment at 392–421 (EGASNYGAGPRSAYGNDSSTQPPYATSQAV) is disordered. Polar residues predominate over residues 406–421 (GNDSSTQPPYATSQAV).

Interacts with sqd; the interaction is RNA-dependent and may be specific for sqd isoform A/sqdA. Interacts with otu; the interaction is RNA-independent.

The protein resides in the nucleus. It is found in the cytoplasm. Its function is as follows. This protein is a component of ribonucleosomes. Could be needed to organize a concentration gradient of a dorsalizing morphogen (Dm) originating in the germinal vesicle. Interacts with grk mRNA (via 3' UTR) and involved in its localization to the dorsal anterior region of the oocyte during dorsal-ventral axis determination; may function as a ribonuclear protein complex together with sqd and otu. Required for polytene chromosome dispersal in nurse cells during oogenesis. May be involved in the regulation of splicing. This Drosophila melanogaster (Fruit fly) protein is Heterogeneous nuclear ribonucleoprotein 27C.